Here is a 337-residue protein sequence, read N- to C-terminus: Ketol-acid reductoisomerase (NADP(+)) (337 aa).

In terms of domain architecture, KARI N-terminal Rossmann spans 1–180; sequence MQVYYDKDAD…GGTKGGVIET (180 aa). NADP(+) is bound by residues 24 to 27, arginine 47, and serine 51; that span reads YGSQ. The active site involves histidine 106. NADP(+) is bound at residue glycine 132. The region spanning 181 to 326 is the KARI C-terminal knotted domain; the sequence is TFREETETDL…ARLRAMMPWI (146 aa). Mg(2+)-binding residues include aspartate 189, glutamate 193, glutamate 225, and glutamate 229. Serine 250 lines the substrate pocket.

The protein belongs to the ketol-acid reductoisomerase family. Mg(2+) serves as cofactor.

The enzyme catalyses (2R)-2,3-dihydroxy-3-methylbutanoate + NADP(+) = (2S)-2-acetolactate + NADPH + H(+). It catalyses the reaction (2R,3R)-2,3-dihydroxy-3-methylpentanoate + NADP(+) = (S)-2-ethyl-2-hydroxy-3-oxobutanoate + NADPH + H(+). The protein operates within amino-acid biosynthesis; L-isoleucine biosynthesis; L-isoleucine from 2-oxobutanoate: step 2/4. Its pathway is amino-acid biosynthesis; L-valine biosynthesis; L-valine from pyruvate: step 2/4. Involved in the biosynthesis of branched-chain amino acids (BCAA). Catalyzes an alkyl-migration followed by a ketol-acid reduction of (S)-2-acetolactate (S2AL) to yield (R)-2,3-dihydroxy-isovalerate. In the isomerase reaction, S2AL is rearranged via a Mg-dependent methyl migration to produce 3-hydroxy-3-methyl-2-ketobutyrate (HMKB). In the reductase reaction, this 2-ketoacid undergoes a metal-dependent reduction by NADPH to yield (R)-2,3-dihydroxy-isovalerate. This chain is Ketol-acid reductoisomerase (NADP(+)), found in Neisseria gonorrhoeae (strain ATCC 700825 / FA 1090).